A 436-amino-acid chain; its full sequence is Cold sensitive U2 snRNA suppressor 1 (436 aa).

The span at 1-10 shows a compositional bias: basic residues; the sequence is MARTKSRKRS. A disordered region spans residues 1 to 22; that stretch reads MARTKSRKRSGNNQNKNASVVN. A compositionally biased stretch (low complexity) spans 12–22; that stretch reads NNQNKNASVVN. Phosphothreonine is present on residues Thr-104 and Thr-112. Ser-114 is modified (phosphoserine). Positions 374–436 are disordered; sequence EFENSKEDTQ…SEKQLYTVLK (63 aa). Positions 389–408 are enriched in basic and acidic residues; sequence GRQDDKIDDEVEHKLDHFQE.

To mammalian SAP 145. Some, to C.elegans ZK632.11. In terms of assembly, belongs to the CWC complex (or CEF1-associated complex), a spliceosome sub-complex reminiscent of a late-stage spliceosome composed of the U2, U5 and U6 snRNAs and at least BUD13, BUD31, BRR2, CDC40, CEF1, CLF1, CUS1, CWC2, CWC15, CWC21, CWC22, CWC23, CWC24, CWC25, CWC27, ECM2, HSH155, IST3, ISY1, LEA1, MSL1, NTC20, PRP8, PRP9, PRP11, PRP19, PRP21, PRP22, PRP45, PRP46, SLU7, SMB1, SMD1, SMD2, SMD3, SMX2, SMX3, SNT309, SNU114, SPP2, SYF1, SYF2, RSE1 and YJU2. Interacts with RDS3.

It localises to the nucleus. Functionally, essential splicing protein required for U2 snRNP binding to pre-mRNA during spliceosome assembly. The protein is Cold sensitive U2 snRNA suppressor 1 (CUS1) of Saccharomyces cerevisiae (strain ATCC 204508 / S288c) (Baker's yeast).